Reading from the N-terminus, the 587-residue chain is Aspartate--tRNA ligase (587 aa).

L-aspartate is bound at residue E174. The aspartate stretch occupies residues 198–201 (QITK). Residue R220 participates in L-aspartate binding. Residues 220–222 (RDE) and Q229 each bind ATP. H443 serves as a coordination point for L-aspartate. ATP is bound at residue E477. R484 provides a ligand contact to L-aspartate. An ATP-binding site is contributed by 529–532 (GLDR).

This sequence belongs to the class-II aminoacyl-tRNA synthetase family. Type 1 subfamily. In terms of assembly, homodimer.

The protein resides in the cytoplasm. It catalyses the reaction tRNA(Asp) + L-aspartate + ATP = L-aspartyl-tRNA(Asp) + AMP + diphosphate. Its function is as follows. Catalyzes the attachment of L-aspartate to tRNA(Asp) in a two-step reaction: L-aspartate is first activated by ATP to form Asp-AMP and then transferred to the acceptor end of tRNA(Asp). This Streptococcus pneumoniae (strain Hungary19A-6) protein is Aspartate--tRNA ligase.